Consider the following 252-residue polypeptide: MPIIQSVERALQILDLFNEQATELKITDISKLMGLSKSTLHSLLKTLQLHGYIDQNPENGKYRLGMKLVERGHFVVGSIDIRQKAKGWLTELSRRTGQTTHLGILDGREGVYIEKIEGKLAAIAYSRIGRRLPVHATAIGKVLIAWLGEAELNALLEGYQYTTFTPATLASREALMSALAQTREQGYALDSEENEQGVRCVAVPVWNHESRVIAALSLSTLTSRVDDAELANFREQLQQAGLALSRALGYPA.

An HTH iclR-type domain is found at Ile4–Met66. Residues Lys25–Lys45 constitute a DNA-binding region (H-T-H motif). Residues Ile81–Tyr250 enclose the IclR-ED domain.

Activity may be controlled by xylonate. Involved in regulation of xylonate catabolism. Represses the expression of both yagA and yagEF operons. Binds mainly at a single site within the spacer of the bidirectional transcription units yagA and yagEF. The sequence is that of HTH-type transcriptional regulator XynR from Escherichia coli (strain K12).